Reading from the N-terminus, the 307-residue chain is MTQKVIVIVGPTAVGKTALSIDIAKKYKGQIISGDSMQVYRNLDIGTAKITPDEMGDIKHYMIDILQVQQRFSVADFIDNCRKDIKEIANDDNIPIIVGGTGFYLQALLDGYSLGGDTFDQLSIERRKKWQLFMEKNGKEKLWEELAKLDIVAARKIPINNFRRVIRALEVIEQTGRLFSEQHDESNEEFEPLLIGLNTQRSTLYERINKRVDIMIQTGLIEEAKYLYNLGGATLPAGKGIGYKEFYPYFDGEISKDEAIELVKRNSRRYAKRQLTWFRNKMNVVWFDLVNNPEDIKKIYKLIDDWI.

10–17 (GPTAVGKT) serves as a coordination point for ATP. 12-17 (TAVGKT) lines the substrate pocket. The interval 35-38 (DSMQ) is interaction with substrate tRNA.

The protein belongs to the IPP transferase family. As to quaternary structure, monomer. Mg(2+) serves as cofactor.

The enzyme catalyses adenosine(37) in tRNA + dimethylallyl diphosphate = N(6)-dimethylallyladenosine(37) in tRNA + diphosphate. Its function is as follows. Catalyzes the transfer of a dimethylallyl group onto the adenine at position 37 in tRNAs that read codons beginning with uridine, leading to the formation of N6-(dimethylallyl)adenosine (i(6)A). In Ligilactobacillus salivarius (strain UCC118) (Lactobacillus salivarius), this protein is tRNA dimethylallyltransferase.